The chain runs to 476 residues: Bifunctional protein HldE (476 aa).

A ribokinase region spans residues 1 to 319; sequence MKVSLPAFEK…EALALHHGES (319 aa). 195 to 198 contacts ATP; sequence NMSE. D264 is an active-site residue. Residues 345–476 form a cytidylyltransferase region; it reads MTNGCFDILH…AIIQNIMAKQ (132 aa).

It in the N-terminal section; belongs to the carbohydrate kinase PfkB family. The protein in the C-terminal section; belongs to the cytidylyltransferase family. In terms of assembly, homodimer.

It catalyses the reaction D-glycero-beta-D-manno-heptose 7-phosphate + ATP = D-glycero-beta-D-manno-heptose 1,7-bisphosphate + ADP + H(+). The catalysed reaction is D-glycero-beta-D-manno-heptose 1-phosphate + ATP + H(+) = ADP-D-glycero-beta-D-manno-heptose + diphosphate. It participates in nucleotide-sugar biosynthesis; ADP-L-glycero-beta-D-manno-heptose biosynthesis; ADP-L-glycero-beta-D-manno-heptose from D-glycero-beta-D-manno-heptose 7-phosphate: step 1/4. It functions in the pathway nucleotide-sugar biosynthesis; ADP-L-glycero-beta-D-manno-heptose biosynthesis; ADP-L-glycero-beta-D-manno-heptose from D-glycero-beta-D-manno-heptose 7-phosphate: step 3/4. Catalyzes the phosphorylation of D-glycero-D-manno-heptose 7-phosphate at the C-1 position to selectively form D-glycero-beta-D-manno-heptose-1,7-bisphosphate. Functionally, catalyzes the ADP transfer from ATP to D-glycero-beta-D-manno-heptose 1-phosphate, yielding ADP-D-glycero-beta-D-manno-heptose. The polypeptide is Bifunctional protein HldE (Shewanella sp. (strain MR-4)).